The chain runs to 396 residues: Probable sugar efflux transporter (396 aa).

Over 1–14 (MTINPVSRKVAWLR) the chain is Cytoplasmic. A helical membrane pass occupies residues 15–35 (VVTLAIAAFIFNTTEFVPVGL). The Periplasmic portion of the chain corresponds to 36 to 49 (LSDIAESFHMQTAQ). A helical membrane pass occupies residues 50-70 (VGIMLTIYAWVVAVMSLPFML). At 71–80 (LTSQMERRKL) the chain is on the cytoplasmic side. Residues 81–101 (LIYLFVLFIASHVLSFLAWNF) traverse the membrane as a helical segment. Position 102 (threonine 102) is a topological domain, periplasmic. A helical membrane pass occupies residues 103–123 (VLVISRIGIAFAHAIFWSITA). Residues 124–135 (SLAIRLAPAGKR) lie on the Cytoplasmic side of the membrane. A helical membrane pass occupies residues 136 to 156 (AQALSLIATGTALAMVLGLPI). Over 157-168 (GRVVGQYFGWRT) the chain is Periplasmic. A helical transmembrane segment spans residues 169–189 (TFFAIGMGALITLLCLIKLLP). The Cytoplasmic segment spans residues 190 to 208 (KLPSEHSGSLKSLPLLFRR). The helical transmembrane segment at 209–229 (PALMSLYVLTVVVVTAHYTAY) threads the bilayer. The Periplasmic portion of the chain corresponds to 230–245 (SYIEPFVQNVAGLSAN). The chain crosses the membrane as a helical span at residues 246–266 (FATVLLLILGGAGIIGSLVFG). The Cytoplasmic portion of the chain corresponds to 267–274 (KLGNRHAS). A helical transmembrane segment spans residues 275–295 (SLVSIAIALLVVCLLLLLPAA). Topologically, residues 296–300 (ESEAH) are periplasmic. The chain crosses the membrane as a helical span at residues 301 to 321 (LAILSIFWGIAIMVIGLGMQV). Residues 322 to 332 (KVLALAPDATD) are Cytoplasmic-facing. A helical membrane pass occupies residues 333–353 (VAMALFSGIFNIGIGAGALVG). Topologically, residues 354-363 (NQVSLHWSMS) are periplasmic. A helical transmembrane segment spans residues 364 to 384 (AIGYIGAIPACAALVWAVLIF). Topologically, residues 385–396 (RKWPVTLEEQPH) are cytoplasmic.

Belongs to the major facilitator superfamily. SotB (TC 2.A.1.2) family.

It localises to the cell inner membrane. Functionally, involved in the efflux of sugars. The physiological role may be the reduction of the intracellular concentration of toxic sugars or sugar metabolites. This is Probable sugar efflux transporter from Salmonella typhimurium (strain LT2 / SGSC1412 / ATCC 700720).